A 513-amino-acid chain; its full sequence is ATP synthase subunit alpha (513 aa).

169 to 176 provides a ligand contact to ATP; sequence GDRQIGKT.

The protein belongs to the ATPase alpha/beta chains family. In terms of assembly, F-type ATPases have 2 components, CF(1) - the catalytic core - and CF(0) - the membrane proton channel. CF(1) has five subunits: alpha(3), beta(3), gamma(1), delta(1), epsilon(1). CF(0) has three main subunits: a(1), b(2) and c(9-12). The alpha and beta chains form an alternating ring which encloses part of the gamma chain. CF(1) is attached to CF(0) by a central stalk formed by the gamma and epsilon chains, while a peripheral stalk is formed by the delta and b chains.

The protein localises to the cell inner membrane. It catalyses the reaction ATP + H2O + 4 H(+)(in) = ADP + phosphate + 5 H(+)(out). Produces ATP from ADP in the presence of a proton gradient across the membrane. The alpha chain is a regulatory subunit. The polypeptide is ATP synthase subunit alpha (Francisella tularensis subsp. mediasiatica (strain FSC147)).